A 341-amino-acid chain; its full sequence is Coiled-coil domain-containing protein 86 (341 aa).

Positions 1–341 (MGTPLRRSRR…QPPQRPVAKV (341 aa)) are disordered. A Phosphoserine modification is found at S18. The segment covering 26 to 49 (EVSRAKRALVDFKSNPEETRELES) has biased composition (basic and acidic residues). S59 carries the phosphoserine modification. Residues 64–73 (PETSPESPCP) are compositionally biased toward low complexity. The residue at position 66 (T66) is a Phosphothreonine. Phosphoserine is present on residues S67, S70, S81, S92, S103, S114, and S124. The span at 105-114 (AGQTESNPES) shows a compositional bias: polar residues. Basic and acidic residues predominate over residues 130–139 (EVAHAKEEVI). 4 positions are modified to phosphoserine: S142, S169, S170, and S200. The span at 219–235 (GKPKSGRVWKDRSKKRF) shows a compositional bias: basic residues. Positions 254-298 (ERQERKLAKDFARHLEEEKQRRRQEKKERRAENLRRRLENERKAE) are enriched in basic and acidic residues. A coiled-coil region spans residues 261 to 304 (AKDFARHLEEEKQRRRQEKKERRAENLRRRLENERKAEIVQVIR). A compositionally biased stretch (basic residues) spans 307–317 (AKLKKAKKKQL). Citrulline is present on R323.

In terms of processing, citrullinated by PADI4.

It localises to the nucleus. The protein localises to the chromosome. Its subcellular location is the nucleolus. In terms of biological role, required for proper chromosome segregation during mitosis and error-free mitotic progression. The polypeptide is Coiled-coil domain-containing protein 86 (Rattus norvegicus (Rat)).